Reading from the N-terminus, the 384-residue chain is 8-amino-7-oxononanoate synthase (384 aa).

R21 contributes to the substrate binding site. Position 108–109 (G108–F109) interacts with pyridoxal 5'-phosphate. Position 133 (H133) interacts with substrate. Residues S179, H207, and T233 each contribute to the pyridoxal 5'-phosphate site. An N6-(pyridoxal phosphate)lysine modification is found at K236. T352 provides a ligand contact to substrate.

This sequence belongs to the class-II pyridoxal-phosphate-dependent aminotransferase family. BioF subfamily. As to quaternary structure, homodimer. The cofactor is pyridoxal 5'-phosphate.

It carries out the reaction 6-carboxyhexanoyl-[ACP] + L-alanine + H(+) = (8S)-8-amino-7-oxononanoate + holo-[ACP] + CO2. It participates in cofactor biosynthesis; biotin biosynthesis. Catalyzes the decarboxylative condensation of pimeloyl-[acyl-carrier protein] and L-alanine to produce 8-amino-7-oxononanoate (AON), [acyl-carrier protein], and carbon dioxide. The chain is 8-amino-7-oxononanoate synthase from Shigella sonnei (strain Ss046).